An 888-amino-acid polypeptide reads, in one-letter code: Alanine--tRNA ligase (888 aa).

Residues His571, His575, Cys674, and His678 each contribute to the Zn(2+) site.

Belongs to the class-II aminoacyl-tRNA synthetase family. Zn(2+) serves as cofactor.

Its subcellular location is the cytoplasm. The catalysed reaction is tRNA(Ala) + L-alanine + ATP = L-alanyl-tRNA(Ala) + AMP + diphosphate. In terms of biological role, catalyzes the attachment of alanine to tRNA(Ala) in a two-step reaction: alanine is first activated by ATP to form Ala-AMP and then transferred to the acceptor end of tRNA(Ala). Also edits incorrectly charged Ser-tRNA(Ala) and Gly-tRNA(Ala) via its editing domain. The protein is Alanine--tRNA ligase of Nocardia farcinica (strain IFM 10152).